A 136-amino-acid polypeptide reads, in one-letter code: Large ribosomal subunit protein bL19 (136 aa).

The segment at 1 to 23 is disordered; that stretch reads MEETVNNQETPETSEEETADEET. A compositionally biased stretch (acidic residues) spans 12–23; the sequence is ETSEEETADEET.

This sequence belongs to the bacterial ribosomal protein bL19 family.

Its function is as follows. This protein is located at the 30S-50S ribosomal subunit interface and may play a role in the structure and function of the aminoacyl-tRNA binding site. The protein is Large ribosomal subunit protein bL19 of Dehalococcoides mccartyi (strain ATCC BAA-2266 / KCTC 15142 / 195) (Dehalococcoides ethenogenes (strain 195)).